Reading from the N-terminus, the 82-residue chain is Small ribosomal subunit protein bS16 (82 aa).

It belongs to the bacterial ribosomal protein bS16 family.

This Vibrio campbellii (strain ATCC BAA-1116) protein is Small ribosomal subunit protein bS16.